The following is a 505-amino-acid chain: RNA-splicing ligase RtcB homolog (505 aa).

Mn(2+)-binding residues include D119, C122, H227, H259, and H353. 226–230 (NHYGE) contributes to the GMP binding site. GMP is bound by residues 353–354 (HN), 402–405 (GGTM), S409, 428–431 (HGAG), and K504. The GMP-histidine intermediate role is filled by H428.

This sequence belongs to the RtcB family. Catalytic component of the tRNA-splicing ligase complex. The cofactor is Mn(2+).

It carries out the reaction a 3'-end 3'-phospho-ribonucleotide-RNA + a 5'-end dephospho-ribonucleoside-RNA + GTP = a ribonucleotidyl-ribonucleotide-RNA + GMP + diphosphate. The catalysed reaction is a 3'-end 2',3'-cyclophospho-ribonucleotide-RNA + a 5'-end dephospho-ribonucleoside-RNA + GTP + H2O = a ribonucleotidyl-ribonucleotide-RNA + GMP + diphosphate + H(+). Functionally, catalytic subunit of the tRNA-splicing ligase complex that acts by directly joining spliced tRNA halves to mature-sized tRNAs by incorporating the precursor-derived splice junction phosphate into the mature tRNA as a canonical 3',5'-phosphodiester. May act as an RNA ligase with broad substrate specificity, and may function toward other RNAs. The sequence is that of RNA-splicing ligase RtcB homolog from Brugia malayi (Filarial nematode worm).